A 494-amino-acid chain; its full sequence is tRNA-2-methylthio-N(6)-dimethylallyladenosine synthase (494 aa).

An MTTase N-terminal domain is found at 4–120 (RSYQVRTFGC…LPVLLERARH (117 aa)). Residues cysteine 13, cysteine 49, cysteine 83, cysteine 157, cysteine 161, and cysteine 164 each contribute to the [4Fe-4S] cluster site. Residues 143 to 374 (RASHHSAWVS…SLQDEMSWAE (232 aa)) form the Radical SAM core domain. The region spanning 376–449 (RAQVGRRVEI…PHHLTADGPL (74 aa)) is the TRAM domain. A disordered region spans residues 465–494 (RAIAGDTPRPDRPAVSLGMPQLRPSAPAAR).

Belongs to the methylthiotransferase family. MiaB subfamily. In terms of assembly, monomer. [4Fe-4S] cluster is required as a cofactor.

It localises to the cytoplasm. It carries out the reaction N(6)-dimethylallyladenosine(37) in tRNA + (sulfur carrier)-SH + AH2 + 2 S-adenosyl-L-methionine = 2-methylsulfanyl-N(6)-dimethylallyladenosine(37) in tRNA + (sulfur carrier)-H + 5'-deoxyadenosine + L-methionine + A + S-adenosyl-L-homocysteine + 2 H(+). Functionally, catalyzes the methylthiolation of N6-(dimethylallyl)adenosine (i(6)A), leading to the formation of 2-methylthio-N6-(dimethylallyl)adenosine (ms(2)i(6)A) at position 37 in tRNAs that read codons beginning with uridine. This Parafrankia sp. (strain EAN1pec) protein is tRNA-2-methylthio-N(6)-dimethylallyladenosine synthase.